The chain runs to 789 residues: Bifunctional purine biosynthetic protein PUR2,5 (789 aa).

Positions Met1–Phe428 are GARS. Residues Lys114–Glu321 form the ATP-grasp domain. ATP is bound at residue Ile140–Ser201. Mg(2+) is bound by residues Glu291 and Asn293. An AIRS region spans residues Leu438 to Glu773.

In the N-terminal section; belongs to the GARS family. This sequence in the C-terminal section; belongs to the AIR synthase family. Requires Mg(2+) as cofactor. The cofactor is Mn(2+).

It is found in the cytoplasm. The protein localises to the cytosol. The catalysed reaction is 2-formamido-N(1)-(5-O-phospho-beta-D-ribosyl)acetamidine + ATP = 5-amino-1-(5-phospho-beta-D-ribosyl)imidazole + ADP + phosphate + H(+). It carries out the reaction 5-phospho-beta-D-ribosylamine + glycine + ATP = N(1)-(5-phospho-beta-D-ribosyl)glycinamide + ADP + phosphate + H(+). Its pathway is purine metabolism; IMP biosynthesis via de novo pathway; 5-amino-1-(5-phospho-D-ribosyl)imidazole from N(2)-formyl-N(1)-(5-phospho-D-ribosyl)glycinamide: step 2/2. It participates in purine metabolism; IMP biosynthesis via de novo pathway; N(1)-(5-phospho-D-ribosyl)glycinamide from 5-phospho-alpha-D-ribose 1-diphosphate: step 2/2. In terms of biological role, catalyzes the second and fifth step in the 'de novo' purine biosynthesis pathway; contains phosphoribosylamine--glycine ligase (GARS) and phosphoribosylformylglycinamidine cyclo-ligase (AIRS) activities. The sequence is that of Bifunctional purine biosynthetic protein PUR2,5 from Pichia angusta (Yeast).